The following is a 217-amino-acid chain: Thiamine-phosphate synthase (217 aa).

4-amino-2-methyl-5-(diphosphooxymethyl)pyrimidine contacts are provided by residues 45–49 and N81; that span reads QFRQK. The Mg(2+) site is built by D82 and D101. A 4-amino-2-methyl-5-(diphosphooxymethyl)pyrimidine-binding site is contributed by S120. 147–149 serves as a coordination point for 2-[(2R,5Z)-2-carboxy-4-methylthiazol-5(2H)-ylidene]ethyl phosphate; the sequence is TPS. K150 lines the 4-amino-2-methyl-5-(diphosphooxymethyl)pyrimidine pocket. 2-[(2R,5Z)-2-carboxy-4-methylthiazol-5(2H)-ylidene]ethyl phosphate is bound by residues G179 and 197 to 198; that span reads IS.

Belongs to the thiamine-phosphate synthase family. It depends on Mg(2+) as a cofactor.

The enzyme catalyses 2-[(2R,5Z)-2-carboxy-4-methylthiazol-5(2H)-ylidene]ethyl phosphate + 4-amino-2-methyl-5-(diphosphooxymethyl)pyrimidine + 2 H(+) = thiamine phosphate + CO2 + diphosphate. It catalyses the reaction 2-(2-carboxy-4-methylthiazol-5-yl)ethyl phosphate + 4-amino-2-methyl-5-(diphosphooxymethyl)pyrimidine + 2 H(+) = thiamine phosphate + CO2 + diphosphate. It carries out the reaction 4-methyl-5-(2-phosphooxyethyl)-thiazole + 4-amino-2-methyl-5-(diphosphooxymethyl)pyrimidine + H(+) = thiamine phosphate + diphosphate. It participates in cofactor biosynthesis; thiamine diphosphate biosynthesis; thiamine phosphate from 4-amino-2-methyl-5-diphosphomethylpyrimidine and 4-methyl-5-(2-phosphoethyl)-thiazole: step 1/1. In terms of biological role, condenses 4-methyl-5-(beta-hydroxyethyl)thiazole monophosphate (THZ-P) and 2-methyl-4-amino-5-hydroxymethyl pyrimidine pyrophosphate (HMP-PP) to form thiamine monophosphate (TMP). The chain is Thiamine-phosphate synthase from Helicobacter pylori (strain J99 / ATCC 700824) (Campylobacter pylori J99).